The sequence spans 344 residues: MASILISGAAGVSIPLVGTLLPLNGGLMRGAKAFAAGVILATGFVHMLSGGSKALSDPCLPEFPWKMFPFPEFFAMVAALLTLLADFMITGYYERKQEKMMNQSVESLGTQVSVMSDPGLESGFLRDQEDGGALHIVGMRAHAEHHRHSLSMGAEGFEALSKRSGVSGHGHGHSHGHGDVGLDSGVRHVVVSQILEMGIVSHSIIIGISLGVSHSPCTIRPLLLALSFHQFFEGFALGGCVAEARLTPRGSAMMAFFFAITTPIGVAVGTAIASSYNSYSVAALVAEGVLDSLSAGILVYMALVDLIAADFLSKKMSVDFRVQVVSYCFLFLGAGMMSALAIWA.

A helical membrane pass occupies residues 1 to 21; it reads MASILISGAAGVSIPLVGTLL. Topologically, residues 22-30 are cytoplasmic; the sequence is PLNGGLMRG. The helical transmembrane segment at 31-51 threads the bilayer; sequence AKAFAAGVILATGFVHMLSGG. The Extracellular segment spans residues 52 to 72; the sequence is SKALSDPCLPEFPWKMFPFPE. A helical transmembrane segment spans residues 73–93; the sequence is FFAMVAALLTLLADFMITGYY. The Cytoplasmic segment spans residues 94–188; that stretch reads ERKQEKMMNQ…DVGLDSGVRH (95 aa). The chain crosses the membrane as a helical span at residues 189–209; sequence VVVSQILEMGIVSHSIIIGIS. Residues 210–221 are Extracellular-facing; it reads LGVSHSPCTIRP. The chain crosses the membrane as a helical span at residues 222 to 242; it reads LLLALSFHQFFEGFALGGCVA. At 243–251 the chain is on the cytoplasmic side; it reads EARLTPRGS. Residues 252 to 272 form a helical membrane-spanning segment; the sequence is AMMAFFFAITTPIGVAVGTAI. The Extracellular segment spans residues 273–291; it reads ASSYNSYSVAALVAEGVLD. Residues 292–312 form a helical membrane-spanning segment; the sequence is SLSAGILVYMALVDLIAADFL. The Cytoplasmic portion of the chain corresponds to 313-323; sequence SKKMSVDFRVQ. The chain crosses the membrane as a helical span at residues 324-344; sequence VVSYCFLFLGAGMMSALAIWA.

This sequence belongs to the ZIP transporter (TC 2.A.5) family.

The protein resides in the cell membrane. Functionally, zinc transporter involved in zinc uptake in roots. Targeted by BZIP19 transcription factor in response to zinc-deficient conditions. The chain is Zinc transporter 9 (ZIP9) from Arabidopsis thaliana (Mouse-ear cress).